Here is a 270-residue protein sequence, read N- to C-terminus: Orotidine 5'-phosphate decarboxylase (270 aa).

Lys89 (proton donor) is an active-site residue.

This sequence belongs to the OMP decarboxylase family. Type 2 subfamily.

The enzyme catalyses orotidine 5'-phosphate + H(+) = UMP + CO2. Its pathway is pyrimidine metabolism; UMP biosynthesis via de novo pathway; UMP from orotate: step 2/2. This chain is Orotidine 5'-phosphate decarboxylase, found in Dehalococcoides mccartyi (strain ATCC BAA-2266 / KCTC 15142 / 195) (Dehalococcoides ethenogenes (strain 195)).